A 166-amino-acid chain; its full sequence is Lipoprotein signal peptidase (166 aa).

4 consecutive transmembrane segments (helical) span residues 11–31 (VWLWLSLLLLVVDFASKTLVV), 42–62 (LLPVFSITYVHNYGAAYSFLS), 67–87 (WQRWFLSAIAIAISGLLVWWL), and 90–110 (LPATNKVLCAAYSLVLAGAIG). Catalysis depends on residues D123 and D141. The chain crosses the membrane as a helical span at residues 133–153 (HFPVFNVADCAICIGAALLLF).

Belongs to the peptidase A8 family.

It is found in the cell inner membrane. It catalyses the reaction Release of signal peptides from bacterial membrane prolipoproteins. Hydrolyzes -Xaa-Yaa-Zaa-|-(S,diacylglyceryl)Cys-, in which Xaa is hydrophobic (preferably Leu), and Yaa (Ala or Ser) and Zaa (Gly or Ala) have small, neutral side chains.. It functions in the pathway protein modification; lipoprotein biosynthesis (signal peptide cleavage). This protein specifically catalyzes the removal of signal peptides from prolipoproteins. The polypeptide is Lipoprotein signal peptidase (Pseudoalteromonas translucida (strain TAC 125)).